The primary structure comprises 810 residues: Lon protease (810 aa).

The 194-residue stretch at 40–233 (LIIVPVRGFV…MVAKLLAQRI (194 aa)) folds into the Lon N-terminal domain. 385 to 392 (GPPGVGKT) serves as a coordination point for ATP. Residues 621–802 (LSVPGVATGL…DDAMAAAFEG (182 aa)) form the Lon proteolytic domain. Residues serine 708 and lysine 751 contribute to the active site.

The protein belongs to the peptidase S16 family. Homohexamer. Organized in a ring with a central cavity.

Its subcellular location is the cytoplasm. The catalysed reaction is Hydrolysis of proteins in presence of ATP.. Its function is as follows. ATP-dependent serine protease that mediates the selective degradation of mutant and abnormal proteins as well as certain short-lived regulatory proteins. Required for cellular homeostasis and for survival from DNA damage and developmental changes induced by stress. Degrades polypeptides processively to yield small peptide fragments that are 5 to 10 amino acids long. Binds to DNA in a double-stranded, site-specific manner. The protein is Lon protease of Methylocella silvestris (strain DSM 15510 / CIP 108128 / LMG 27833 / NCIMB 13906 / BL2).